A 587-amino-acid polypeptide reads, in one-letter code: Putative gustatory receptor 59b (587 aa).

Residues 1–4 lie on the Cytoplasmic side of the membrane; that stretch reads MPSY. The helical transmembrane segment at 5 to 25 threads the bilayer; the sequence is MAFTPYIMFSTNYAAIAYILI. Residues 26–62 lie on the Extracellular side of the membrane; sequence SRCYRDSMLLDLQRITLEVNREMLRTGKKMNSLIRRM. Residues 63–83 form a helical membrane-spanning segment; the sequence is FFLKTFTLTYSCLSYILAVLV. At 84–97 the chain is on the cytoplasmic side; sequence YQWRAQNWSNLFNG. The helical transmembrane segment at 98-118 threads the bilayer; that stretch reads LLVNISLTILVVTTFFYFVSL. Residues 119–277 lie on the Extracellular side of the membrane; sequence MHVARGFDFV…CGLYPVNKAK (159 aa). N-linked (GlcNAc...) asparagine glycosylation occurs at asparagine 159. A helical membrane pass occupies residues 278–298; it reads WLEMVASIVVHSIMLFQFHLV. The Cytoplasmic portion of the chain corresponds to 299-309; that stretch reads MRGGYTTLFSR. The helical transmembrane segment at 310–330 threads the bilayer; sequence TYALLANIITLTMLPIVMWQV. The Extracellular portion of the chain corresponds to 331-403; sequence RSVFLAKRHY…GIDGVRRSLR (73 aa). Residues 404 to 424 traverse the membrane as a helical segment; that stretch reads ILLFVKFFTLSWLCITDIIFL. Residues 425–518 are Cytoplasmic-facing; sequence FYSSDAVIWV…IYAPQMLATR (94 aa). The helical transmembrane segment at 519–539 threads the bilayer; it reads FDHFVIGVIQAYWGAVFTFDL. Residues 540–587 are Extracellular-facing; sequence STSFLWVVYGSVQYHVRSLDYYLIDYMCDVAVEYHDSARHSWSEKECY.

It belongs to the insect chemoreceptor superfamily. Gustatory receptor (GR) family. Gr22e subfamily.

It is found in the cell membrane. Its function is as follows. Probable gustatory receptor which mediates acceptance or avoidance behavior, depending on its substrates. The polypeptide is Putative gustatory receptor 59b (Drosophila erecta (Fruit fly)).